We begin with the raw amino-acid sequence, 156 residues long: UPF0225 protein PFLU_1319 (156 aa).

Belongs to the UPF0225 family.

In Pseudomonas fluorescens (strain SBW25), this protein is UPF0225 protein PFLU_1319.